A 400-amino-acid polypeptide reads, in one-letter code: Nicotinate phosphoribosyltransferase (400 aa).

Residue His-220 is modified to Phosphohistidine; by autocatalysis.

The protein belongs to the NAPRTase family. In terms of processing, transiently phosphorylated on a His residue during the reaction cycle. Phosphorylation strongly increases the affinity for substrates and increases the rate of nicotinate D-ribonucleotide production. Dephosphorylation regenerates the low-affinity form of the enzyme, leading to product release.

The enzyme catalyses nicotinate + 5-phospho-alpha-D-ribose 1-diphosphate + ATP + H2O = nicotinate beta-D-ribonucleotide + ADP + phosphate + diphosphate. Its pathway is cofactor biosynthesis; NAD(+) biosynthesis; nicotinate D-ribonucleotide from nicotinate: step 1/1. Its function is as follows. Catalyzes the synthesis of beta-nicotinate D-ribonucleotide from nicotinate and 5-phospho-D-ribose 1-phosphate at the expense of ATP. The chain is Nicotinate phosphoribosyltransferase from Salmonella schwarzengrund (strain CVM19633).